A 93-amino-acid chain; its full sequence is YcgL domain-containing protein KPK_1976 (93 aa).

The YcgL domain occupies 1 to 85 (MFCVIYRSTK…PSENLLKKHL (85 aa)).

The sequence is that of YcgL domain-containing protein KPK_1976 from Klebsiella pneumoniae (strain 342).